Reading from the N-terminus, the 217-residue chain is Thiopurine S-methyltransferase (217 aa).

S-adenosyl-L-methionine contacts are provided by W11, L46, E67, and R122.

The protein belongs to the class I-like SAM-binding methyltransferase superfamily. TPMT family.

It localises to the cytoplasm. It carries out the reaction S-adenosyl-L-methionine + a thiopurine = S-adenosyl-L-homocysteine + a thiopurine S-methylether.. The polypeptide is Thiopurine S-methyltransferase (Vibrio vulnificus (strain YJ016)).